A 307-amino-acid polypeptide reads, in one-letter code: Oxygen-dependent coproporphyrinogen-III oxidase (307 aa).

S97 lines the substrate pocket. A divalent metal cation is bound by residues H101 and H111. H111 acts as the Proton donor in catalysis. 113–115 contributes to the substrate binding site; sequence NVR. Positions 152 and 182 each coordinate a divalent metal cation. The interval 247-282 is important for dimerization; it reads YVEFNLVWDRGTHFGLQSGGRTESILMSMPPLASWS. A substrate-binding site is contributed by 265-267; that stretch reads GGR.

This sequence belongs to the aerobic coproporphyrinogen-III oxidase family. In terms of assembly, homodimer. A divalent metal cation serves as cofactor.

It localises to the cytoplasm. It catalyses the reaction coproporphyrinogen III + O2 + 2 H(+) = protoporphyrinogen IX + 2 CO2 + 2 H2O. Its pathway is porphyrin-containing compound metabolism; protoporphyrin-IX biosynthesis; protoporphyrinogen-IX from coproporphyrinogen-III (O2 route): step 1/1. Functionally, involved in the heme biosynthesis. Catalyzes the aerobic oxidative decarboxylation of propionate groups of rings A and B of coproporphyrinogen-III to yield the vinyl groups in protoporphyrinogen-IX. This Polaromonas naphthalenivorans (strain CJ2) protein is Oxygen-dependent coproporphyrinogen-III oxidase.